The primary structure comprises 298 residues: Probable endonuclease 4 (298 aa).

Residues His-69, His-111, Glu-146, Asp-180, His-183, His-215, Asp-228, His-230, and Glu-260 each contribute to the Zn(2+) site.

It belongs to the AP endonuclease 2 family. Zn(2+) serves as cofactor.

It catalyses the reaction Endonucleolytic cleavage to 5'-phosphooligonucleotide end-products.. Endonuclease IV plays a role in DNA repair. It cleaves phosphodiester bonds at apurinic or apyrimidinic (AP) sites, generating a 3'-hydroxyl group and a 5'-terminal sugar phosphate. The protein is Probable endonuclease 4 of Bacillus cereus (strain AH187).